A 904-amino-acid polypeptide reads, in one-letter code: Leucine--tRNA ligase (904 aa).

Residues 49-59 (PYPSGDLHIGH) carry the 'HIGH' region motif. Residues 663-667 (TMSKS) carry the 'KMSKS' region motif. Lys666 serves as a coordination point for ATP.

It belongs to the class-I aminoacyl-tRNA synthetase family.

The protein resides in the cytoplasm. The enzyme catalyses tRNA(Leu) + L-leucine + ATP = L-leucyl-tRNA(Leu) + AMP + diphosphate. The protein is Leucine--tRNA ligase of Roseiflexus castenholzii (strain DSM 13941 / HLO8).